We begin with the raw amino-acid sequence, 211 residues long: Histidine biosynthesis bifunctional protein HisIE (211 aa).

The tract at residues 1 to 122 (MSVKAAEVSS…DPQEESQMVW (122 aa)) is phosphoribosyl-AMP cyclohydrolase. The segment at 123–211 (LHQLEQLLAA…VINKLKERHK (89 aa)) is phosphoribosyl-ATP pyrophosphohydrolase.

It in the N-terminal section; belongs to the PRA-CH family. In the C-terminal section; belongs to the PRA-PH family.

It localises to the cytoplasm. It catalyses the reaction 1-(5-phospho-beta-D-ribosyl)-ATP + H2O = 1-(5-phospho-beta-D-ribosyl)-5'-AMP + diphosphate + H(+). It carries out the reaction 1-(5-phospho-beta-D-ribosyl)-5'-AMP + H2O = 1-(5-phospho-beta-D-ribosyl)-5-[(5-phospho-beta-D-ribosylamino)methylideneamino]imidazole-4-carboxamide. The protein operates within amino-acid biosynthesis; L-histidine biosynthesis; L-histidine from 5-phospho-alpha-D-ribose 1-diphosphate: step 2/9. It functions in the pathway amino-acid biosynthesis; L-histidine biosynthesis; L-histidine from 5-phospho-alpha-D-ribose 1-diphosphate: step 3/9. In Vibrio vulnificus (strain YJ016), this protein is Histidine biosynthesis bifunctional protein HisIE.